The chain runs to 501 residues: uncharacterized protein (501 aa).

Disordered stretches follow at residues 179 to 404 and 480 to 501; these read EKTS…DETA and SDDT…DDSD. Over residues 191–200 the composition is skewed to basic and acidic residues; it reads SRNESQDKSR. A compositionally biased stretch (basic residues) spans 201–214; it reads DKSRKKVCNTHKNK. Basic and acidic residues predominate over residues 215–226; sequence KTLDNVKPDKNI. Residues 231–274 show a composition bias toward low complexity; the sequence is SSNKFTTNKPKSNKNSSDSDGSTKTTKSTRSTKSTKSSKSQKST. A compositionally biased stretch (basic and acidic residues) spans 304 to 316; sequence NPKESINHKKNDS. A compositionally biased stretch (polar residues) spans 333–352; the sequence is DSTNCRKSNRTTTRDVTNSD. The span at 379–403 shows a compositional bias: acidic residues; sequence EQSDLTEDETEENVSEEDETEEDET.

This is an uncharacterized protein from Acanthamoeba polyphaga mimivirus (APMV).